The sequence spans 2371 residues: MPHFRESSSSSENGAIDHDLQHTFQRILSDDQYTKFSPNEPPLSQQLEPIAVVGMGCRLPGDVSSPSDFWKLMMEKKSGQTPKVPSSRFNIDAHFHPDNDRPGSFGVLGGYFINETLKEFDPAFFGITPVEATWMDPQQRKLLEVVYEAFESAGLTLDQLSGSDTACFMATFTADFQQMSFKEPSFRHSLAATGVDPGLLSNRVSHVFNLRGPSIVVNTACSSSVYALHNACNALRTHECSAAVVGGSNLILTVDQHMNTAKLGVMSPTSTCHTFNSYANGYGRAEGVGAIYLKRLSDAVRDGDPIRGVIRSSATNNNGKAPGVGITYPGFDGQRTVMRHAYQRSGLDPMLTGYFECHGTGTAIGDPLEVHAVSDIMNAARKDADGPLNIGAVKTNIGHSEAASGLSAVIKSILMVERGIIPPTHGVTDLNPKIDWKGWKVHVPTDPIPMPKHLPVTRVSVNSFGYGGTNAHTIIESPKSLLSAPQNYKYSMSGPTIKAKQPRGATRRNRPHLLVFSAHDTGTLKRNAAALGKVAPNYNLLDLSFTLANHRTRFQSRGMVVTTPATLQKTFTDGMPDFMVASKNVTARNLGFVFTGQGAQWAGMGQQLMTYYPTFLKAIRRMDLVLEDLDDAPSWTLEESLLENPETSRVGEAEFSQPLCTAVQVALVQLLRTWGIRPSVTLGHSSGEIAAAYAAGYLSEADAILAAYYRGQVVKSIDTSGAMMAVGLGAEAVKSYLEPFQAEVVVACHNSPVGVTLSGNIDALKAIEETLKVDGVFARLVKTNSKAYHSHHMLPAVDKYETLLRDNSQKGISGVSLNKVKMVSTVTNSVLSEDAVLDGKYWSANLVSPVLFNQAIQSALTNKDMHIDTLIEIGPHSALSGPIRQIKAELGADKVQYLPTLIRGSPCAGQVLKLAGEFFLRDYPINLSQVSMLEETSPSGKILSRSGNLIVDLPPYQWDKTKKFWAESRESKEHRSPRFPRHDVLGQLTIGGSLTEPTWRNVLRLKDLPWLRDHSLGGEAVFPAAGYLAMAMEATTQLNEMSGSPREIKSYVFRDVRIQQALVTPDDDDGIEVLFNMCPSRLATDNTATQSWDFNASSVSPEGHLKNHMAGSIRINTSNKQRAVARPVPNLPQRASGKLWNQALKKVGFNYGPTFQDMDNITFDGTSYCAQSMTNLKSTVMDNESRYVLHPAILDSCLQLMIVAIWAGRAGAMKFGAVPVNAEEIVIWRPTATQLDNSSAAKAFSWIDPRGQRLFNAHNQLLAGDGEVLMEIKSMRCTAYEAAIPQTLETNVQPEPYSQMVSKPDVSFLNGDQRDLDLADFIALAHFKNPALRVLATDASTASLLLSRIPALGLTVATGSSGVSDMEAQFAGFDNASVLSLDLNDSLARQSHEKLTRSFNLVISPGASMATLRTVSELLLEGGQAVLQQDPTFSDQGLKDAGFSGLECFLGQSMFVTSSIQTRKPVLSTVQLLYHTNPTSHMSPLELQLRDAGIKTERLKLGDSCTPGANIIALADLERPLIASMSEFDFLQIQKTLSEASKILWVSCGGSLEGSPEYAMTRGLLRSLRSERAALKATLVDFVPDDLDTNEFSLRTTSLAATLFEGDQELETEYLARDGQLLITRLVPFDIVNQRHGHNGDETQPHPFDAETNLVGKVEAGKVVFEHSRSDPEPLQETEVEFRPLATGLTAEGRAIISGASFETDFSHEASGIVTRVGDAVNKVSIGDRVVAFSSNTFSNFQRVQECLVQRLQDDEDSATMASLPLYYGAALYGLETLARLRPGESVLILPGLGLLGAAAIKVAQALGGHPSVAVRDSAEAEEVEVAFGVPRSQILVAYSPDRLMRCHEIDVVFSGSTTEPLLAEESWRNLPALSRFVSCSNSSASAAPSFASTAISRGASYLSVNITGLFKKPHILGGLLERIIELFRSGLIPAPLLNVQNIAEINHIGSPSSQSLSSTETVLVHEKGTGTVDVVQSRPRLELRSDATYLLVGCLGGLGRSLTTWMMKRGACHFAFLSRSGTDSEQARICVQELEARGANVQVFRGDAAVKEDVEMAVASISAHCPLRGVVNAAMVLRDGLFQNMSYDNWTTSIRPKVLGSKNLHEAIASLDLDFFLMTSSVSGILGTPTQANYAAANSYMDALACLRRRQGKHACAVVLPMILGVGVVAQDLDLEVSLKRKGMYGIDEEALLSAFEAAIFEQQHSQDSQSNFDHLVVGLEATKLYNARQEAEGDVDAFWTTDPRFSVLLDDMKQHSGDNQGDGEKGSILSQVKAASDSPAQAISLVRDHFISKLARVLLLDQDEFDDDGSGRSIASYGIDSMIGAELRNWIFKELGLDVAFQQLLSPSLTISKFAELVCAAQGIVLDNE.

The Ketosynthase family 3 (KS3) domain maps to 47-477 (LEPIAVVGMG…GTNAHTIIES (431 aa)). Catalysis depends on for beta-ketoacyl synthase activity residues C221, H358, and H399. The tract at residues 593-905 (VFTGQGAQWA…QYLPTLIRGS (313 aa)) is malonyl-CoA:ACP transacylase (MAT) domain. S685 (for malonyltransferase activity) is an active-site residue. The N-terminal hotdog fold stretch occupies residues 982–1120 (HDVLGQLTIG…GSIRINTSNK (139 aa)). The tract at residues 982–1158 (HDVLGQLTIG…FNYGPTFQDM (177 aa)) is dehydratase (DH) domain. One can recognise a PKS/mFAS DH domain in the interval 982 to 1286 (HDVLGQLTIG…CTAYEAAIPQ (305 aa)). H1014 (proton acceptor; for dehydratase activity) is an active-site residue. Residues 1132–1286 (PQRASGKLWN…CTAYEAAIPQ (155 aa)) are C-terminal hotdog fold. The Proton donor; for dehydratase activity role is filled by D1195. The tract at residues 1656–1964 (GKVEAGKVVF…QSLSSTETVL (309 aa)) is enoyl reductase (ER) domain. The segment at 1988 to 2163 (ATYLLVGCLG…KHACAVVLPM (176 aa)) is ketoreductase (KR) domain. Residues 2286–2364 (SLVRDHFISK…KFAELVCAAQ (79 aa)) enclose the Carrier domain. S2323 bears the O-(pantetheine 4'-phosphoryl)serine mark.

It functions in the pathway polyketide biosynthesis. Its function is as follows. Part of the gene cluster that mediates the biosynthesis of depudecin, a highly oxidized eleven-carbon linear polyketide that acts as a histone deacetylase (HDAC) inhibitor and makes a small contribution to pathogenesis. The reducing polyketide synthase DEP5 is the central enzyme in depudecin biosynthesis by yielding the backbone polyketide chain. The monooxygenases DEP2 and DEP4, as well as the uncharacterized protein DEP1, then act as tailoring enzymes to modify the intermediate polyketide chain into depudecin. The protein is Reducing polyketide synthase DEP5 of Fusarium langsethiae.